The primary structure comprises 254 residues: Hydroxyacylglutathione hydrolase (254 aa).

Zn(2+)-binding residues include histidine 53, histidine 55, aspartate 57, histidine 58, histidine 111, aspartate 128, and histidine 166.

The protein belongs to the metallo-beta-lactamase superfamily. Glyoxalase II family. As to quaternary structure, monomer. It depends on Zn(2+) as a cofactor.

It catalyses the reaction an S-(2-hydroxyacyl)glutathione + H2O = a 2-hydroxy carboxylate + glutathione + H(+). It participates in secondary metabolite metabolism; methylglyoxal degradation; (R)-lactate from methylglyoxal: step 2/2. Its function is as follows. Thiolesterase that catalyzes the hydrolysis of S-D-lactoyl-glutathione to form glutathione and D-lactic acid. The sequence is that of Hydroxyacylglutathione hydrolase from Aeromonas hydrophila subsp. hydrophila (strain ATCC 7966 / DSM 30187 / BCRC 13018 / CCUG 14551 / JCM 1027 / KCTC 2358 / NCIMB 9240 / NCTC 8049).